The chain runs to 439 residues: Proline--tRNA ligase (439 aa).

Belongs to the class-II aminoacyl-tRNA synthetase family. ProS type 2 subfamily. As to quaternary structure, homodimer.

Its subcellular location is the cytoplasm. The enzyme catalyses tRNA(Pro) + L-proline + ATP = L-prolyl-tRNA(Pro) + AMP + diphosphate. In terms of biological role, catalyzes the attachment of proline to tRNA(Pro) in a two-step reaction: proline is first activated by ATP to form Pro-AMP and then transferred to the acceptor end of tRNA(Pro). This Rhodopseudomonas palustris (strain BisA53) protein is Proline--tRNA ligase.